Consider the following 299-residue polypeptide: MEHFDASLSTYFKALLGPRDTRVKGWFLLDNYIPTFICSVIYLLIVWLGPKYMRNKQPFSCRGILVVYNLGLTLLSLYMFCELVTGVWEGKYNFFCQGTRTAGESDMKIIRVLWWYYFSKLIEFMDTFFFILRKNNHQITVLHVYHHASMLNIWWFVMNWVPCGHSYFGATLNSFIHVLMYSYYGLSSVPSMRPYLWWKKYITQGQLLQFVLTIIQTSCGVIWPCTFPLGWLYFQIGYMISLIALFTNFYIQTYNKKGASRRKDHLKDHQNGSMAAVNGHTNSFSPLENNVKPRKLRKD.

Methionine 1 is modified (N-acetylmethionine). 7 consecutive transmembrane segments (helical) span residues 26–46 (WFLLDNYIPTFICSVIYLLIV), 64–84 (ILVVYNLGLTLLSLYMFCELV), 112–132 (VLWWYYFSKLIEFMDTFFFIL), 139–158 (ITVLHVYHHASMLNIWWFVM), 168–187 (FGATLNSFIHVLMYSYYGLS), 205–225 (GQLLQFVLTIIQTSCGVIWPC), and 226–246 (TFPLGWLYFQIGYMISLIALF). The disordered stretch occupies residues 274–299 (MAAVNGHTNSFSPLENNVKPRKLRKD). The span at 279–288 (GHTNSFSPLE) shows a compositional bias: polar residues. At serine 285 the chain carries Phosphoserine.

This sequence belongs to the ELO family. ELOVL5 subfamily. In terms of assembly, interacts with TECR. In terms of tissue distribution, ubiquitous. Highly expressed in the adrenal gland and testis. Weakly expressed in prostate, lung and brain. Expressed in the cerebellum.

The protein localises to the endoplasmic reticulum membrane. It is found in the cell projection. The protein resides in the dendrite. The enzyme catalyses a very-long-chain acyl-CoA + malonyl-CoA + H(+) = a very-long-chain 3-oxoacyl-CoA + CO2 + CoA. It carries out the reaction (6Z,9Z,12Z)-octadecatrienoyl-CoA + malonyl-CoA + H(+) = (8Z,11Z,14Z)-3-oxoeicosatrienoyl-CoA + CO2 + CoA. It catalyses the reaction (9Z,12Z,15Z)-octadecatrienoyl-CoA + malonyl-CoA + H(+) = (11Z,14Z,17Z)-3-oxoeicosatrienoyl-CoA + CO2 + CoA. The catalysed reaction is (9Z)-hexadecenoyl-CoA + malonyl-CoA + H(+) = 3-oxo-(11Z)-octadecenoyl-CoA + CO2 + CoA. The enzyme catalyses (9Z)-octadecenoyl-CoA + malonyl-CoA + H(+) = 3-oxo-(11Z)-eicosenoyl-CoA + CO2 + CoA. It carries out the reaction (11Z)-octadecenoyl-CoA + malonyl-CoA + H(+) = 3-oxo-(13Z)-eicosenoyl-CoA + CO2 + CoA. It catalyses the reaction (9Z,12Z)-octadecadienoyl-CoA + malonyl-CoA + H(+) = (11Z,14Z)-3-oxoicosa-11,14-dienoyl-CoA + CO2 + CoA. The catalysed reaction is (6Z,9Z,12Z,15Z)-octadecatetraenoyl-CoA + malonyl-CoA + H(+) = (8Z,11Z,14Z,17Z)-3-oxoicosatetraenoyl-CoA + CO2 + CoA. The enzyme catalyses (5Z,8Z,11Z,14Z)-eicosatetraenoyl-CoA + malonyl-CoA + H(+) = (7Z,10Z,13Z,16Z)-3-oxodocosatetraenoyl-CoA + CO2 + CoA. It carries out the reaction (5Z,8Z,11Z,14Z,17Z)-eicosapentaenoyl-CoA + malonyl-CoA + H(+) = 3-oxo-(7Z,10Z,13Z,16Z,19Z)-docosapentaenoyl-CoA + CO2 + CoA. Its pathway is lipid metabolism; polyunsaturated fatty acid biosynthesis. Catalyzes the first and rate-limiting reaction of the four reactions that constitute the long-chain fatty acids elongation cycle. This endoplasmic reticulum-bound enzymatic process allows the addition of 2 carbons to the chain of long- and very long-chain fatty acids (VLCFAs) per cycle. Condensing enzyme that acts specifically toward polyunsaturated acyl-CoA with the higher activity toward C18:3(n-6) acyl-CoA. May participate in the production of monounsaturated and of polyunsaturated VLCFAs of different chain lengths that are involved in multiple biological processes as precursors of membrane lipids and lipid mediators. In conditions where the essential linoleic and alpha linoleic fatty acids are lacking it is also involved in the synthesis of Mead acid from oleic acid. In Homo sapiens (Human), this protein is Very long chain fatty acid elongase 5.